A 1722-amino-acid chain; its full sequence is MSDPRQSQEEKHKLGRASSKFKDPPRIMQSDDYFARKFKAINGNMGPTTSLNASNSNETGGGGPANGTPAVPKMGVRARVSEWPPKKDCSKELTCKALWESRSQTSYESITSVLQNGQSDQSEGQQDEQLDLDFVEAKYTIGDIFVHSPQRGLHPIRQRSNSDVTISDIDAEDVLDQNAVNPNTGAALHREYGSTSSIDRQGLSGENFFAMLRGYRVENYDHKAMVPFGFPEFFRCDPAISPSLHAAAQISRGEFVRISGLDYVDSALLMGRDRDKPFKRRLKSESVETSLFRKLRTVKSEHETFKFTSELEESRLERGIRPWNCQRCFAHYDVQSILFNINEAMATRANVGKRKNITTGASAASQTQMPTGQTGNCESPLGSKEDLNSKENLDADEGDGKSNDLVLSCPYFRNETGGEGDRRIALSRANSSSFSSGESCSFESSLSSHCTNAGVSVLEVPRENQPIHREKVKRYIIEHIDLGAYYYRKFFYGKEHQNYFGIDENLGPVAVSIRREKVEDAKEKEGSQFNYRVAFRTSELTTLRGAILEDAIPSTARHGTARGLPLKEVLEYVIPELSIQCLRQASNSPKVSEQLLKLDEQGLSFQHKIGILYCKAGQSTEEEMYNNETAGPAFEEFLDLLGQRVRLKGFSKYRAQLDNKTDSTGTHSLYTTYKDYELMFHVSTLLPYMPNNRQQLLRKRHIGNDIVTIVFQEPGALPFTPKSIRSHFQHVFVIVKVHNPCTENVCYSVGVSRSKDVPPFGPPIPKGVTFPKSAVFRDFLLAKVINAENAAHKSEKFRAMATRTRQEYLKDLAENFVTTATVDTSVKFSFITLGAKKKEKVKPRKDAHLFSIGAIMWHVIARDFGQSADIECLLGISNEFIMLIEKDSKNVVFNCSCRDVIGWTSGLVSIKVFYERGECVLLSSVDNCAEDIREIVQRLVIVTRGCETVEMTLRRNGLGQLGFHVNFEGIVADVEPFGFAWKAGLRQGSRLVEICKVAVATLTHEQMIDLLRTSVTVKVVIIQPHDDGSPRRGCSELCRIPMVEYKLDSEGTPCEYKTPFRRNTTWHRVPTPALQPLSRASPIPGTPDRLPCQQLLQQAQAAIPRSTSFDRKLPDGTRSSPSNQSSSSDPGPGGSGPWRPQVGYDGCQSPLLLEHQGSGPLECDGAREREDTMEASRHPETKWHGPPSKVLGSYKERALQKDGSCKDSPNKLSHIGDKSCSSHSSSNTLSSNTSSNSDDKHFGSGDLMDPELLGLTYIKGASTDSGIDTAPCMPATILGPVHLAGSRSLIHSRAEQWADAADVSGPDDEPAKLYSVHGYASTISAGSAAEGSMGDLSEISSHSSGSHHSGSPSAHCSKSSGSLDSSKVYIVSHSSGQQVPGSMSKPYHRQGAVNKYVIGWKKSEGSPPPEEPEVTECPGMYSEMDVMSTATQHQTVVGDAVAETQHVLSKEDFLKLMLPDSPLVEEGRRKFSFYGNLSPRRSLYRTLSDESICSNRRGSSFGSSRSSVLDQALPNDILFSTTPPYHSTLPPRAHPAPSMGSLRNEFWFSDGSLSDKSKCADPGLMPLPDTATGLDWTHLVDAARAFEGLDSDEELGLLCHHTSYLDQRVASFCTLTDMQHGQDLEGAQELPLCVDPGSGKEFMDTTGERSPSPLTGKVNQLELILRQLQTDLRKEKQDKAVLQAEVQHLRQDNMRLQEESQTATAQLRKFTEWFFTTIDKKS.

Residues 1-12 (MSDPRQSQEEKH) are compositionally biased toward basic and acidic residues. Disordered stretches follow at residues 1–29 (MSDPRQSQEEKHKLGRASSKFKDPPRIMQ) and 42–72 (NGNMGPTTSLNASNSNETGGGGPANGTPAVP). The span at 45 to 56 (MGPTTSLNASNS) shows a compositional bias: polar residues. Serine 148 is modified (phosphoserine). Polar residues predominate over residues 360 to 377 (GASAASQTQMPTGQTGNC). The disordered stretch occupies residues 360-401 (GASAASQTQMPTGQTGNCESPLGSKEDLNSKENLDADEGDGK). Serine 379 and serine 383 each carry phosphoserine. Positions 383-401 (SKEDLNSKENLDADEGDGK) are enriched in basic and acidic residues. A Rap-GAP domain is found at 595–812 (LLKLDEQGLS…RTRQEYLKDL (218 aa)). The region spanning 950–1026 (EMTLRRNGLG…VKVVIIQPHD (77 aa)) is the PDZ domain. Serine 1029 carries the post-translational modification Phosphoserine. 2 disordered regions span residues 1067–1245 (HRVP…FGSG) and 1330–1360 (EGSMGDLSEISSHSSGSHHSGSPSAHCSKSS). 2 stretches are compositionally biased toward low complexity: residues 1093 to 1102 (QQLLQQAQAA) and 1119 to 1130 (SSPSNQSSSSDP). Composition is skewed to basic and acidic residues over residues 1164 to 1183 (DGAREREDTMEASRHPETKW) and 1194 to 1217 (YKERALQKDGSCKDSPNKLSHIGD). Over residues 1219–1236 (SCSSHSSSNTLSSNTSSN) the composition is skewed to low complexity. Serine 1244 carries the phosphoserine modification. Low complexity predominate over residues 1337–1360 (SEISSHSSGSHHSGSPSAHCSKSS). Phosphoserine is present on residues serine 1461, serine 1472, serine 1478, serine 1488, serine 1549, serine 1552, and serine 1591. A coiled-coil region spans residues 1654-1712 (LTGKVNQLELILRQLQTDLRKEKQDKAVLQAEVQHLRQDNMRLQEESQTATAQLRKFTE).

This is Signal-induced proliferation-associated 1-like protein 2 (SIPA1L2) from Homo sapiens (Human).